We begin with the raw amino-acid sequence, 346 residues long: tRNA N6-adenosine threonylcarbamoyltransferase (346 aa).

Fe cation contacts are provided by His-111 and His-115. Residues 134–138, Asp-167, Gly-180, Asp-184, and Asn-279 contribute to the substrate site; that span reads LVSGG. Asp-307 lines the Fe cation pocket.

The protein belongs to the KAE1 / TsaD family. It depends on Fe(2+) as a cofactor.

The protein localises to the cytoplasm. It carries out the reaction L-threonylcarbamoyladenylate + adenosine(37) in tRNA = N(6)-L-threonylcarbamoyladenosine(37) in tRNA + AMP + H(+). Functionally, required for the formation of a threonylcarbamoyl group on adenosine at position 37 (t(6)A37) in tRNAs that read codons beginning with adenine. Is involved in the transfer of the threonylcarbamoyl moiety of threonylcarbamoyl-AMP (TC-AMP) to the N6 group of A37, together with TsaE and TsaB. TsaD likely plays a direct catalytic role in this reaction. In Nostoc sp. (strain PCC 7120 / SAG 25.82 / UTEX 2576), this protein is tRNA N6-adenosine threonylcarbamoyltransferase.